The sequence spans 259 residues: MNMQRILVYSDKGVSPYYLRHTVRWLKQAAFPFQMEVCRVNGQFLIHEPLWEETTQLLVIPGGADVPYHHVLHGLGTARIDNYVREGGAYLGICAGAYFGCAHFSFLEPNGSLLVAKRDLGFFPGMANGPAYDSAFSYTSSSGVLAASLRFTDFPGKSFALFNGGCYFENAEDFSEVRVEARYNDLPGSPAAIISRRLDRGLVVLSGPHIEYLPEFCSLQEENVVHAREQIAKNSAGLEEYKQTLIKRLLSNVVEHVLY.

Belongs to the chlamydial CPn_0128/CT_035/TC_0305 family.

This is an uncharacterized protein from Chlamydia muridarum (strain MoPn / Nigg).